The following is a 239-amino-acid chain: 7-cyano-7-deazaguanine synthase (239 aa).

ATP is bound at residue 8–18 (FSGGLDSTASL). Positions 194, 209, 212, and 215 each coordinate Zn(2+).

The protein belongs to the QueC family.

It catalyses the reaction 7-carboxy-7-deazaguanine + NH4(+) + ATP = 7-cyano-7-deazaguanine + ADP + phosphate + H2O + H(+). It participates in purine metabolism; 7-cyano-7-deazaguanine biosynthesis. Catalyzes the ATP-dependent conversion of 7-carboxy-7-deazaguanine (CDG) to 7-cyano-7-deazaguanine (preQ(0)). In Pyrococcus abyssi (strain GE5 / Orsay), this protein is 7-cyano-7-deazaguanine synthase.